An 847-amino-acid polypeptide reads, in one-letter code: MHLLGPWLLLLVLEYLAFSDSSKWVFEHPETLYAWEGACVWIPCTYRALDGDLESFILFHNPEYNKNTSKFDGTRLYESTKDGKVPSEQKRVQFLGDKNKNCTLSIHPVHLNDSGQLGLRMESKTEKWMERIHLNVSERPFPPHIQLPPEIQESQEVTLTCLLNFSCYGYPIQLQWLLEGVPMRQAAVTSTSLTIKSVFTRSELKFSPQWSHHGKIVTCQLQDADGKFLSNDTVQLNVKHTPKLEIKVTPSDAIVREGDSVTMTCEVSSSNPEYTTVSWLKDGTSLKKQNTFTLNLREVTKDQSGKYCCQVSNDVGPGRSEEVFLQVQYAPEPSTVQILHSPAVEGSQVEFLCMSLANPLPTNYTWYHNGKEMQGRTEEKVHIPKILPWHAGTYSCVAENILGTGQRGPGAELDVQYPPKKVTTVIQNPMPIREGDTVTLSCNYNSSNPSVTRYEWKPHGAWEEPSLGVLKIQNVGWDNTTIACAACNSWCSWASPVALNVQYAPRDVRVRKIKPLSEIHSGNSVSLQCDFSSSHPKEVQFFWEKNGRLLGKESQLNFDSISPEDAGSYSCWVNNSIGQTASKAWTLEVLYAPRRLRVSMSPGDQVMEGKSATLTCESDANPPVSHYTWFDWNNQSLPYHSQKLRLEPVKVQHSGAYWCQGTNSVGKGRSPLSTLTVYYSPETIGRRVAVGLGSCLAILILAICGLKLQRRWKRTQSQQGLQENSSGQSFFVRNKKVRRAPLSEGPHSLGCYNPMMEDGISYTTLRFPEMNIPRTGDAESSEMQRPPPDCDDTVTYSALHKRQVGDYENVIPDFPEDEGIHYSELIQFGVGERPQAQENVDYVILKH.

Positions 1–19 (MHLLGPWLLLLVLEYLAFS) are cleaved as a signal peptide. In terms of domain architecture, Ig-like V-type spans 20–138 (DSSKWVFEHP…MERIHLNVSE (119 aa)). Residues 20–687 (DSSKWVFEHP…YYSPETIGRR (668 aa)) are Extracellular-facing. Disulfide bonds link cysteine 39/cysteine 167, cysteine 44/cysteine 102, and cysteine 161/cysteine 219. N-linked (GlcNAc...) asparagine glycans are attached at residues asparagine 67, asparagine 101, and asparagine 112. Arginine 120 contacts N-acetylneuraminate. N-linked (GlcNAc...) asparagine glycosylation is found at asparagine 135, asparagine 164, and asparagine 231. Ig-like C2-type domains lie at 143–235 (PHIQ…DTVQ), 242–326 (PKLE…VFLQ), 331–416 (PEPS…LDVQ), 419–500 (PKKV…VALN), 505–582 (PRDV…QTAS), and 593–676 (PRRL…STLT). 4 disulfides stabilise this stretch: cysteine 265–cysteine 309, cysteine 353–cysteine 396, cysteine 442–cysteine 484, and cysteine 529–cysteine 571. N-linked (GlcNAc...) asparagine glycosylation is found at asparagine 363, asparagine 445, and asparagine 479. N-linked (GlcNAc...) asparagine glycosylation is found at asparagine 574 and asparagine 634. Cysteine 616 and cysteine 659 are joined by a disulfide. The chain crosses the membrane as a helical span at residues 688–706 (VAVGLGSCLAILILAICGL). The Cytoplasmic segment spans residues 707–847 (KLQRRWKRTQ…ENVDYVILKH (141 aa)). Phosphoserine is present on residues serine 725, serine 726, and serine 729. Short sequence motifs (ITIM motif) lie at residues 760-765 (ISYTTL) and 794-799 (VTYSAL). At tyrosine 762 the chain carries Phosphotyrosine. Residues tyrosine 807, tyrosine 822, and tyrosine 842 each carry the phosphotyrosine modification. Short sequence motifs (ITIM motif) lie at residues 820–825 (IHYSEL) and 840–845 (VDYVIL).

It belongs to the immunoglobulin superfamily. SIGLEC (sialic acid binding Ig-like lectin) family. Predominantly monomer of isoform CD22-beta. Also found as heterodimer of isoform CD22-beta and a shorter isoform. Interacts with PTPN6/SHP-1, LYN, SYK, PIK3R1/PIK3R2 and PLCG1 upon phosphorylation. Interacts with GRB2, INPP5D and SHC1 upon phosphorylation. May form a complex with INPP5D/SHIP, GRB2 and SHC1. Post-translationally, phosphorylation of Tyr-762, Tyr-807 and Tyr-822 are involved in binding to SYK, GRB2 and SYK, respectively. Phosphorylation of Tyr-842 is involved in binding to SYK, PLCG2 and PIK3R1/PIK3R2. Phosphorylated on tyrosine residues by LYN. In terms of tissue distribution, B-lymphocytes.

It localises to the cell membrane. Functionally, most highly expressed siglec (sialic acid-binding immunoglobulin-like lectin) on B-cells that plays a role in various aspects of B-cell biology including differentiation, antigen presentation, and trafficking to bone marrow. Binds to alpha 2,6-linked sialic acid residues of surface molecules such as CD22 itself, CD45 and IgM in a cis configuration. Can also bind to ligands on other cells as an adhesion molecule in a trans configuration. Acts as an inhibitory coreceptor on the surface of B-cells and inhibits B-cell receptor induced signaling, characterized by inhibition of the calcium mobilization and cellular activation. Mechanistically, the immunoreceptor tyrosine-based inhibitory motif domain is phosphorylated by the Src kinase LYN, which in turn leads to the recruitment of the protein tyrosine phosphatase 1/PTPN6, leading to the negative regulation of BCR signaling. If this negative signaling from is of sufficient strength, apoptosis of the B-cell can be induced. This Homo sapiens (Human) protein is B-cell receptor CD22.